Reading from the N-terminus, the 404-residue chain is Putative transporter AmpG 2 (404 aa).

12 helical membrane passes run 11–31, 49–69, 84–104, 109–129, 154–174, 177–197, 224–244, 261–281, 294–311, 315–337, 353–373, and 378–398; these read IYNILFILFISLPGGLIYLLT, IGLFSLVNFIHIFKFLWGPLL, YCLIFSLLSCICCVYILTGFN, FISFSLCLIILAFFSSIYDML, FRIGILISGSGALYLSTIISW, VYRTMAILCVPSLLLIIFYPL, WLIIVGFMLLYRLQDNFLAVM, LGYKAFGMCATIAGGFIGGFL, VLVYHALSSITFLLLYSY, ITTLYIAVFLQEFTKGLTMSPFF, IALITSIAYISTVLFGSISGY, and LGWGYFFAIASFCFIPAYILI.

The protein belongs to the major facilitator superfamily.

The protein resides in the cell inner membrane. This chain is Putative transporter AmpG 2 (ampG2), found in Rickettsia bellii (strain RML369-C).